Consider the following 119-residue polypeptide: Class I hydrophobin 2 (119 aa).

The signal sequence occupies residues 1–22 (MFARISTIITTLFFAMLAAATA). 4 cysteine pairs are disulfide-bonded: Cys36-Cys97, Cys45-Cys91, Cys46-Cys79, and Cys98-Cys112.

This sequence belongs to the fungal hydrophobin family. In terms of assembly, self-assembles to form functional amyloid fibrils called rodlets. Self-assembly into fibrillar rodlets occurs spontaneously at hydrophobic:hydrophilic interfaces and the rodlets further associate laterally to form amphipathic monolayers.

Its subcellular location is the secreted. It is found in the cell wall. In terms of biological role, aerial growth, conidiation, and dispersal of filamentous fungi in the environment rely upon a capability of their secreting small amphipathic proteins called hydrophobins (HPBs) with low sequence identity. Class I can self-assemble into an outermost layer of rodlet bundles on aerial cell surfaces, conferring cellular hydrophobicity that supports fungal growth, development and dispersal; whereas Class II form highly ordered films at water-air interfaces through intermolecular interactions but contribute nothing to the rodlet structure. Abh2 is a class I hydrophobin involved in the emergence of aerial hyphae and strands. In Agaricus bisporus (White button mushroom), this protein is Class I hydrophobin 2.